A 193-amino-acid polypeptide reads, in one-letter code: Immunogenic protein MPB70 (193 aa).

The signal sequence occupies residues 1–30; the sequence is MKVKNTIAATSFAAAGLAALAVAVSPPAAA. The FAS1 domain maps to 57–189; that stretch reads QDPVAVAASN…ATVYMIDSVL (133 aa).

As to quaternary structure, generally found as a monomer; homodimer in culture fluids.

It is found in the secreted. The protein is Immunogenic protein MPB70 (mpb70) of Mycobacterium bovis (strain ATCC BAA-935 / AF2122/97).